The following is a 204-amino-acid chain: Altered inheritance of mitochondria protein 20 (204 aa).

A helical membrane pass occupies residues 6 to 26; that stretch reads VAVGTAVGIPIAVGVIIALIF.

Belongs to the SKG1 family.

The protein resides in the vacuole membrane. Involved in cell cycle progression and surviving DNA damage. This chain is Altered inheritance of mitochondria protein 20 (AIM20), found in Saccharomyces cerevisiae (strain JAY291) (Baker's yeast).